Reading from the N-terminus, the 75-residue chain is MAITSKYSNKQIEQMLTEMVDVLDKHRAPADLSLMLVGNIATNVLNQEVPAEQRKIIAEKFAQALLSSLDIPKTH.

The protein belongs to the UPF0352 family.

This is UPF0352 protein VSAL_I1058 from Aliivibrio salmonicida (strain LFI1238) (Vibrio salmonicida (strain LFI1238)).